Here is a 1175-residue protein sequence, read N- to C-terminus: 1-phosphatidylinositol 4,5-bisphosphate phosphodiesterase beta-4 (1175 aa).

The residue at position 2 (Ala-2) is an N-acetylalanine. The region spanning 313–463 is the PI-PLC X-box domain; that stretch reads QEMDHPLAHY…LKRKILIKNK (151 aa). Catalysis depends on residues His-328 and His-375. Residues 482–511 form a disordered region; it reads EAGESASPANILEDDNEEEIESADQEEEAH. A compositionally biased stretch (acidic residues) spans 493–508; sequence LEDDNEEEIESADQEE. The PI-PLC Y-box domain maps to 565–681; that stretch reads LSTMINYAQP…GYLLKPDFMR (117 aa). The C2 domain maps to 684 to 809; it reads DRTFDPFSET…SLRNEGNKPL (126 aa). 2 disordered regions span residues 863 to 895 and 1082 to 1110; these read ADVP…ELRP and KISM…VREL. Composition is skewed to polar residues over residues 881-895 and 1085-1094; these read AKAN…ELRP and MENSKAISQD. The residue at position 886 (Thr-886) is a Phosphothreonine. Positions 1095 to 1109 are enriched in basic and acidic residues; sequence KSIKNKAERERRVRE.

Ca(2+) serves as cofactor. As to expression, preferentially expressed in the retina.

Its subcellular location is the cell membrane. It carries out the reaction a 1,2-diacyl-sn-glycero-3-phospho-(1D-myo-inositol-4,5-bisphosphate) + H2O = 1D-myo-inositol 1,4,5-trisphosphate + a 1,2-diacyl-sn-glycerol + H(+). The catalysed reaction is a 1,2-diacyl-sn-glycero-3-phospho-(1D-myo-inositol) + H2O = 1D-myo-inositol 1-phosphate + a 1,2-diacyl-sn-glycerol + H(+). Functionally, activated phosphatidylinositol-specific phospholipase C enzymes catalyze the production of the second messenger molecules diacylglycerol (DAG) and inositol 1,4,5-trisphosphate (IP3) involved in G-protein coupled receptor signaling pathways. PLCB4 is a direct effector of the endothelin receptor signaling pathway that plays an essential role in lower jaw and middle ear structures development. This is 1-phosphatidylinositol 4,5-bisphosphate phosphodiesterase beta-4 from Homo sapiens (Human).